Consider the following 369-residue polypeptide: Protein pxr-1 (369 aa).

Positions 1 to 23 are disordered; it reads MGLAAAKNKRKLGTDPNNTKWSR. The region spanning 25–79 is the G-patch domain; sequence ETTFGQKILRAQGWQPGEFLGAKDAAHAVHHTEASSSHIKVTLKDDNLGLGAKRN. The interval 147–338 is disordered; the sequence is EEDGVPQSDT…GTSTPTVTSS (192 aa). Residues 153–167 are compositionally biased toward polar residues; that stretch reads QSDTVDQQVETVPSQ. Residues 218–227 show a composition bias toward basic residues; it reads SKKKEKKDKK. Residues 228 to 237 show a composition bias toward basic and acidic residues; sequence EKKDQKEKKD. The span at 267–292 shows a compositional bias: basic residues; that stretch reads KSKKDKKKEKKEKKDKKKDKKEKKRK. The span at 304–318 shows a compositional bias: basic and acidic residues; that stretch reads EDSKSKAQKRTKDGA. The segment covering 322-338 has biased composition (low complexity); that stretch reads TSTPGGSGTSTPTVTSS.

The protein belongs to the PINX1 family.

It localises to the nucleus. The protein localises to the nucleolus. Its function is as follows. Involved in rRNA-processing at A0, A1 and A2 sites and negatively regulates telomerase. This is Protein pxr-1 (pxr-1) from Neurospora crassa (strain ATCC 24698 / 74-OR23-1A / CBS 708.71 / DSM 1257 / FGSC 987).